Reading from the N-terminus, the 673-residue chain is DNA ligase (673 aa).

NAD(+)-binding positions include 36-40, 85-86, and glutamate 118; these read DSEYD and SL. Catalysis depends on lysine 120, which acts as the N6-AMP-lysine intermediate. Residues arginine 141, glutamate 178, lysine 295, and lysine 319 each contribute to the NAD(+) site. Zn(2+)-binding residues include cysteine 413, cysteine 416, cysteine 431, and cysteine 437. The BRCT domain maps to 596–673; that stretch reads VRDNPLKGKT…SENEFLALLA (78 aa).

This sequence belongs to the NAD-dependent DNA ligase family. LigA subfamily. Mg(2+) serves as cofactor. Requires Mn(2+) as cofactor.

It catalyses the reaction NAD(+) + (deoxyribonucleotide)n-3'-hydroxyl + 5'-phospho-(deoxyribonucleotide)m = (deoxyribonucleotide)n+m + AMP + beta-nicotinamide D-nucleotide.. Its function is as follows. DNA ligase that catalyzes the formation of phosphodiester linkages between 5'-phosphoryl and 3'-hydroxyl groups in double-stranded DNA using NAD as a coenzyme and as the energy source for the reaction. It is essential for DNA replication and repair of damaged DNA. The protein is DNA ligase of Histophilus somni (strain 129Pt) (Haemophilus somnus).